The sequence spans 296 residues: MPEKEMKLVIVTGMSGAGKTVAIQSFEDLGYFTIDNIPPTLVPKFLQLLETTNDIDKLALVVDMRSRSFFAEIQNVLDQVENNLEIDFKILFLDAADKELVARYKETRRSHPLAADGRILDGIKLERELLAPLKNLSQNVVDTTDLTPRELRKTISEQFSDQSQQQSFRVEVMSFGFKYGLPLDADLVFDVRFLPNPYYQPELRNQTGLDKPVFDYVMNHEESTEFYQHLLNLIEPILPGYKKEGKSVLTIAVGCTGGQHRSVAFAQRLADDLAKNWPVNCSHRDKDRRKETVNRS.

13 to 20 is a binding site for ATP; the sequence is GMSGAGKT. Residue 63 to 66 coordinates GTP; sequence DMRS.

This sequence belongs to the RapZ-like family.

In terms of biological role, displays ATPase and GTPase activities. The protein is Nucleotide-binding protein SGO_0954 of Streptococcus gordonii (strain Challis / ATCC 35105 / BCRC 15272 / CH1 / DL1 / V288).